The chain runs to 413 residues: Hemolin (413 aa).

The signal sequence occupies residues 1 to 18 (MVSKSIVALAACVAMCVA). Ig-like C2-type domains lie at 25–112 (PVLK…HIIS), 121–215 (PTTF…LVGY), 233–322 (PMYV…VKLT), and 327–411 (PRFT…TLVI). Disulfide bonds link cysteine 46-cysteine 97, cysteine 141-cysteine 199, cysteine 252-cysteine 305, and cysteine 349-cysteine 395. Residue asparagine 283 is glycosylated (N-linked (GlcNAc...) asparagine).

The protein belongs to the hemolin family. As to expression, hemolymph.

It localises to the secreted. Insect-immune protein with antimicrobial activity. Forms a protein complex at the bacterial surface. Can inhibit hemocyte aggregation. The polypeptide is Hemolin (Manduca sexta (Tobacco hawkmoth)).